Reading from the N-terminus, the 306-residue chain is 3-methyl-2-oxobutanoate hydroxymethyltransferase (306 aa).

Residues Asp-53 and Asp-96 each contribute to the Mg(2+) site. 3-methyl-2-oxobutanoate is bound by residues Asp-53 to Ser-54, Asp-96, and Lys-126. Glu-128 provides a ligand contact to Mg(2+). The active-site Proton acceptor is the Glu-195.

This sequence belongs to the PanB family. In terms of assembly, homodecamer; pentamer of dimers. The cofactor is Mg(2+).

The protein localises to the cytoplasm. It carries out the reaction 3-methyl-2-oxobutanoate + (6R)-5,10-methylene-5,6,7,8-tetrahydrofolate + H2O = 2-dehydropantoate + (6S)-5,6,7,8-tetrahydrofolate. Its pathway is cofactor biosynthesis; (R)-pantothenate biosynthesis; (R)-pantoate from 3-methyl-2-oxobutanoate: step 1/2. Catalyzes the reversible reaction in which hydroxymethyl group from 5,10-methylenetetrahydrofolate is transferred onto alpha-ketoisovalerate to form ketopantoate. This chain is 3-methyl-2-oxobutanoate hydroxymethyltransferase, found in Anaeromyxobacter sp. (strain K).